The following is a 180-amino-acid chain: MDLPDVTAVQNESRQLALASSAAELHGGLCGWLSGGGADSADWLARILADTGQVAPKQGGALDQLRQATVAQMEDRDFAFELLLVEDGAPLAARTDALFDWCRAFLGGFGLAAQQRPALSEEGEEALQDLARLAQASSDDFDAADEDDTALAEIEEFVRVAVLLLHGDCVMGPRFRQRLN.

The protein belongs to the UPF0149 family.

The chain is UPF0149 protein XOO1028 from Xanthomonas oryzae pv. oryzae (strain MAFF 311018).